A 166-amino-acid chain; its full sequence is Crossover junction endodeoxyribonuclease RuvC (166 aa).

Active-site residues include Asp7, Glu68, and Asp141. The Mg(2+) site is built by Asp7, Glu68, and Asp141.

It belongs to the RuvC family. As to quaternary structure, homodimer which binds Holliday junction (HJ) DNA. The HJ becomes 2-fold symmetrical on binding to RuvC with unstacked arms; it has a different conformation from HJ DNA in complex with RuvA. In the full resolvosome a probable DNA-RuvA(4)-RuvB(12)-RuvC(2) complex forms which resolves the HJ. Mg(2+) serves as cofactor.

It localises to the cytoplasm. It carries out the reaction Endonucleolytic cleavage at a junction such as a reciprocal single-stranded crossover between two homologous DNA duplexes (Holliday junction).. The RuvA-RuvB-RuvC complex processes Holliday junction (HJ) DNA during genetic recombination and DNA repair. Endonuclease that resolves HJ intermediates. Cleaves cruciform DNA by making single-stranded nicks across the HJ at symmetrical positions within the homologous arms, yielding a 5'-phosphate and a 3'-hydroxyl group; requires a central core of homology in the junction. The consensus cleavage sequence is 5'-(A/T)TT(C/G)-3'. Cleavage occurs on the 3'-side of the TT dinucleotide at the point of strand exchange. HJ branch migration catalyzed by RuvA-RuvB allows RuvC to scan DNA until it finds its consensus sequence, where it cleaves and resolves the cruciform DNA. This Caldicellulosiruptor saccharolyticus (strain ATCC 43494 / DSM 8903 / Tp8T 6331) protein is Crossover junction endodeoxyribonuclease RuvC.